Consider the following 155-residue polypeptide: Ribosomal RNA large subunit methyltransferase H (155 aa).

Residues L72, G103, and 122–127 contribute to the S-adenosyl-L-methionine site; that span reads LSTLTL.

It belongs to the RNA methyltransferase RlmH family. As to quaternary structure, homodimer.

It is found in the cytoplasm. The enzyme catalyses pseudouridine(1915) in 23S rRNA + S-adenosyl-L-methionine = N(3)-methylpseudouridine(1915) in 23S rRNA + S-adenosyl-L-homocysteine + H(+). Functionally, specifically methylates the pseudouridine at position 1915 (m3Psi1915) in 23S rRNA. The polypeptide is Ribosomal RNA large subunit methyltransferase H (Klebsiella pneumoniae (strain 342)).